Here is a 786-residue protein sequence, read N- to C-terminus: Leucine-rich repeat extensin-like protein 2 (786 aa).

An N-terminal signal peptide occupies residues 1–28; that stretch reads MLLFPSTSLRLFFFLFLLFSSCFLQIRG. Asparagine 73 and asparagine 79 each carry an N-linked (GlcNAc...) asparagine glycan. LRR repeat units follow at residues 100–124, 125–147, 149–172, 173–196, 198–219, 221–243, 244–267, 268–291, and 292–315; these read TRVV…LGLL, TDLA…TFKH, KLLF…VLSL, PSLK…LFDK, LDAI…MGNS, VSAL…GLMG, KTLN…IGNL, KNVT…IGNM, and KSLE…ICQL. N-linked (GlcNAc...) asparagine glycans are attached at residues asparagine 255 and asparagine 269. 2 N-linked (GlcNAc...) asparagine glycosylation sites follow: asparagine 320 and asparagine 346. 4 disordered regions span residues 352-372, 390-589, 624-645, and 694-786; these read IDGK…SRSV, FKMS…YYAV, PPVY…YYPP, and PPPS…IPYY. The span at 353–362 shows a compositional bias: basic and acidic residues; sequence DGKEDQRSSK. Residues 384-786 form a contains the Ser-Pro(4) repeats region; the sequence is SPPPPSFKMS…SPPPPSIPYY (403 aa). Pro residues-rich tracts occupy residues 460-477, 487-542, and 566-589; these read YPPP…PPPS, YPPP…PPPK, and SPPP…YYAV. 4 stretches are compositionally biased toward pro residues: residues 694–713, 720–737, 752–769, and 777–786; these read PPPS…PPST, PASP…PPPK, PTPP…PLPP, and SPPPPSIPYY.

Hydroxylated on proline residues in the S-P-P-P-P repeat. In terms of processing, O-glycosylated on hydroxyprolines. As to expression, mostly expressed in roots, also present in stems at low levels. In roots, confined to differentiation zones, the collet, and meristematic cells of tips.

The protein localises to the secreted. Its subcellular location is the cell wall. Its function is as follows. Modulates cell morphogenesis by regulating cell wall formation and assembly, and/or growth polarization. Together with LRX2, component of the extracellular mechanism regulating root hair morphogenesis and elongation. This chain is Leucine-rich repeat extensin-like protein 2 (LRX2), found in Arabidopsis thaliana (Mouse-ear cress).